The primary structure comprises 271 residues: 3-methyl-2-oxobutanoate hydroxymethyltransferase (271 aa).

2 residues coordinate Mg(2+): aspartate 44 and aspartate 83. 3-methyl-2-oxobutanoate-binding positions include 44–45, aspartate 83, and lysine 112; that span reads DS. Residue glutamate 114 coordinates Mg(2+). Residue glutamate 181 is the Proton acceptor of the active site.

Belongs to the PanB family. As to quaternary structure, homodecamer; pentamer of dimers. Mg(2+) is required as a cofactor.

The protein localises to the cytoplasm. The enzyme catalyses 3-methyl-2-oxobutanoate + (6R)-5,10-methylene-5,6,7,8-tetrahydrofolate + H2O = 2-dehydropantoate + (6S)-5,6,7,8-tetrahydrofolate. The protein operates within cofactor biosynthesis; coenzyme A biosynthesis. Catalyzes the reversible reaction in which hydroxymethyl group from 5,10-methylenetetrahydrofolate is transferred onto alpha-ketoisovalerate to form ketopantoate. The sequence is that of 3-methyl-2-oxobutanoate hydroxymethyltransferase from Staphylothermus marinus (strain ATCC 43588 / DSM 3639 / JCM 9404 / F1).